Consider the following 46-residue polypeptide: Large ribosomal subunit protein bL36 (46 aa).

It belongs to the bacterial ribosomal protein bL36 family.

In Escherichia coli O7:K1 (strain IAI39 / ExPEC), this protein is Large ribosomal subunit protein bL36.